The sequence spans 260 residues: Octanoyltransferase (260 aa).

Positions 42 to 241 constitute a BPL/LPL catalytic domain; the sequence is PQVPDGLLLL…SFCQVFGLQA (200 aa). Residues 97–104, 172–174, and 185–187 contribute to the substrate site; these read RGGEVTYH, AIG, and GFA. The active-site Acyl-thioester intermediate is the Cys203.

It belongs to the LipB family.

It localises to the cytoplasm. It carries out the reaction octanoyl-[ACP] + L-lysyl-[protein] = N(6)-octanoyl-L-lysyl-[protein] + holo-[ACP] + H(+). It functions in the pathway protein modification; protein lipoylation via endogenous pathway; protein N(6)-(lipoyl)lysine from octanoyl-[acyl-carrier-protein]: step 1/2. Catalyzes the transfer of endogenously produced octanoic acid from octanoyl-acyl-carrier-protein onto the lipoyl domains of lipoate-dependent enzymes. Lipoyl-ACP can also act as a substrate although octanoyl-ACP is likely to be the physiological substrate. The protein is Octanoyltransferase of Synechococcus sp. (strain JA-3-3Ab) (Cyanobacteria bacterium Yellowstone A-Prime).